Consider the following 555-residue polypeptide: Coiled-coil domain-containing protein 102A (555 aa).

Disordered stretches follow at residues 1 to 68 (MSHG…ADGD), 136 to 202 (LAGA…GSQE), and 214 to 254 (PEEP…EEDA). Ser-12, Ser-26, and Ser-28 each carry phosphoserine. The span at 37 to 61 (SLPPTPPSGTPSPGPPPALPLPPTP) shows a compositional bias: pro residues. The stretch at 72–161 (REELRLRELE…ARGRELARLR (90 aa)) forms a coiled coil. 2 stretches are compositionally biased toward basic and acidic residues: residues 136–159 (LAGARRERQEAQGESEARGRELAR) and 166–183 (GVDRTPDGPETEPEREQE). Residues 224–236 (RSAGAGAPRGSSG) show a composition bias toward low complexity. Coiled coils occupy residues 268-401 (QKVL…RRQT) and 432-522 (KLKK…QNAP). The disordered stretch occupies residues 478-555 (ELDEAHNQAR…EDEDLQIQVA (78 aa)). Positions 536–555 (EAGDGASDLDEDEDLQIQVA) are enriched in acidic residues. Ser-542 is modified (phosphoserine).

The sequence is that of Coiled-coil domain-containing protein 102A (CCDC102A) from Bos taurus (Bovine).